The sequence spans 441 residues: Mitochondrial distribution and morphology protein 12 (441 aa).

Residues 1–441 form the SMP-LTD domain; it reads MSIDIDWERA…VYPSFWTFLV (441 aa). 2 disordered regions span residues 70 to 89 and 180 to 289; these read YEDG…PMRE and TPLR…RMRE. Polar residues-rich tracts occupy residues 226–245 and 253–263; these read SRPS…SVST and SSQTVLANNPG.

It belongs to the MDM12 family. Component of the ER-mitochondria encounter structure (ERMES) or MDM complex, composed of MMM1, MDM10, MDM12 and MDM34. An MMM1 homodimer associates with one molecule of MDM12 on each side in a pairwise head-to-tail manner, and the SMP-LTD domains of MMM1 and MDM12 generate a continuous hydrophobic tunnel for phospholipid trafficking.

The protein resides in the mitochondrion outer membrane. Its subcellular location is the endoplasmic reticulum membrane. Functionally, component of the ERMES/MDM complex, which serves as a molecular tether to connect the endoplasmic reticulum (ER) and mitochondria. Components of this complex are involved in the control of mitochondrial shape and protein biogenesis, and function in nonvesicular lipid trafficking between the ER and mitochondria. MDM12 is required for the interaction of the ER-resident membrane protein MMM1 and the outer mitochondrial membrane-resident beta-barrel protein MDM10. The MDM12-MMM1 subcomplex functions in the major beta-barrel assembly pathway that is responsible for biogenesis of all mitochondrial outer membrane beta-barrel proteins, and acts in a late step after the SAM complex. The MDM10-MDM12-MMM1 subcomplex further acts in the TOM40-specific pathway after the action of the MDM12-MMM1 complex. Essential for establishing and maintaining the structure of mitochondria and maintenance of mtDNA nucleoids. This is Mitochondrial distribution and morphology protein 12 from Paracoccidioides brasiliensis (strain Pb03).